Here is a 467-residue protein sequence, read N- to C-terminus: ATP-dependent rRNA helicase rrp3 (467 aa).

The disordered stretch occupies residues 1–48; the sequence is MPGVKKRKVAREAPAPAPAQESDVESSTPEQTQEPEAQEQEQEEGQSK. A Q motif motif is present at residues 48-76; sequence KTFKELGIIEQLCEACETMGYKAPTPIQR. The 172-residue stretch at 79 to 250 folds into the Helicase ATP-binding domain; it reads IPLALKGRDL…RASLSNPLRV (172 aa). 92 to 99 is a binding site for ATP; it reads AETGSGKT. The DEAD box signature appears at 198–201; it reads DEAD. A Helicase C-terminal domain is found at 262-422; that stretch reads TLLQSYLFIP…EYDCPKDEVM (161 aa). Positions 439-467 are disordered; sequence MKDYNEKKGSRGKKFGGKRSRDEMDQEEG.

It belongs to the DEAD box helicase family. DDX47/RRP3 subfamily. In terms of assembly, interacts with the SSU processome.

It localises to the nucleus. The enzyme catalyses ATP + H2O = ADP + phosphate + H(+). In terms of biological role, ATP-dependent rRNA helicase required for pre-ribosomal RNA processing. Involved in the maturation of the 35S-pre-rRNA and to its cleavage to mature 18S rRNA. The protein is ATP-dependent rRNA helicase rrp3 of Aspergillus niger (strain ATCC MYA-4892 / CBS 513.88 / FGSC A1513).